The chain runs to 226 residues: Phosphatidylserine decarboxylase proenzyme (226 aa).

Serine 184 (schiff-base intermediate with substrate; via pyruvic acid) is an active-site residue. Pyruvic acid (Ser); by autocatalysis is present on serine 184.

Belongs to the phosphatidylserine decarboxylase family. PSD-A subfamily. As to quaternary structure, heterodimer of a large membrane-associated beta subunit and a small pyruvoyl-containing alpha subunit. Pyruvate is required as a cofactor. In terms of processing, is synthesized initially as an inactive proenzyme. Formation of the active enzyme involves a self-maturation process in which the active site pyruvoyl group is generated from an internal serine residue via an autocatalytic post-translational modification. Two non-identical subunits are generated from the proenzyme in this reaction, and the pyruvate is formed at the N-terminus of the alpha chain, which is derived from the carboxyl end of the proenzyme. The post-translation cleavage follows an unusual pathway, termed non-hydrolytic serinolysis, in which the side chain hydroxyl group of the serine supplies its oxygen atom to form the C-terminus of the beta chain, while the remainder of the serine residue undergoes an oxidative deamination to produce ammonia and the pyruvoyl prosthetic group on the alpha chain.

It localises to the cell membrane. It catalyses the reaction a 1,2-diacyl-sn-glycero-3-phospho-L-serine + H(+) = a 1,2-diacyl-sn-glycero-3-phosphoethanolamine + CO2. Its pathway is phospholipid metabolism; phosphatidylethanolamine biosynthesis; phosphatidylethanolamine from CDP-diacylglycerol: step 2/2. In terms of biological role, catalyzes the formation of phosphatidylethanolamine (PtdEtn) from phosphatidylserine (PtdSer). In Ehrlichia canis (strain Jake), this protein is Phosphatidylserine decarboxylase proenzyme.